The primary structure comprises 395 residues: Isoafricanol synthase (395 aa).

4 residues coordinate Mg(2+): aspartate 95, asparagine 246, serine 250, and glutamate 254. Over residues 346–357 (TEAVSGGRERPW) the composition is skewed to basic and acidic residues. Residues 346–395 (TEAVSGGRERPWARLTGAEDLIRAGRGAPPPPGSGPDTRQPMPSEPSQLA) form a disordered region.

The protein belongs to the terpene synthase family. Mg(2+) serves as cofactor.

It catalyses the reaction (2E,6E)-farnesyl diphosphate + H2O = (+)-isoafricanol + diphosphate. Catalyzes the cyclization of farnesyl diphosphate (FPP) to isoafricanol. The chain is Isoafricanol synthase from Streptomyces malaysiensis.